A 414-amino-acid polypeptide reads, in one-letter code: Succinylornithine transaminase (414 aa).

The residue at position 260 (Lys-260) is an N6-(pyridoxal phosphate)lysine.

Belongs to the class-III pyridoxal-phosphate-dependent aminotransferase family. AstC subfamily. It depends on pyridoxal 5'-phosphate as a cofactor.

It carries out the reaction N(2)-succinyl-L-ornithine + 2-oxoglutarate = N-succinyl-L-glutamate 5-semialdehyde + L-glutamate. It functions in the pathway amino-acid degradation; L-arginine degradation via AST pathway; L-glutamate and succinate from L-arginine: step 3/5. Its function is as follows. Catalyzes the transamination of N(2)-succinylornithine and alpha-ketoglutarate into N(2)-succinylglutamate semialdehyde and glutamate. Can also act as an acetylornithine aminotransferase. This chain is Succinylornithine transaminase, found in Yersinia pestis bv. Antiqua (strain Antiqua).